The following is a 143-amino-acid chain: Flagellar assembly factor FliW (143 aa).

This sequence belongs to the FliW family. Interacts with translational regulator CsrA and flagellin(s).

It localises to the cytoplasm. Its function is as follows. Acts as an anti-CsrA protein, binds CsrA and prevents it from repressing translation of its target genes, one of which is flagellin. Binds to flagellin and participates in the assembly of the flagellum. This chain is Flagellar assembly factor FliW, found in Clostridium novyi (strain NT).